We begin with the raw amino-acid sequence, 210 residues long: Large ribosomal subunit protein uL4 (210 aa).

Over residues 41–51 (QNNARQGNASA) the composition is skewed to polar residues. The segment at 41–77 (QNNARQGNASAKTRAEVRGGGRKPWKQKGTGRARAGS) is disordered. Residues 60 to 71 (GGRKPWKQKGTG) are compositionally biased toward basic residues.

It belongs to the universal ribosomal protein uL4 family. In terms of assembly, part of the 50S ribosomal subunit.

Functionally, one of the primary rRNA binding proteins, this protein initially binds near the 5'-end of the 23S rRNA. It is important during the early stages of 50S assembly. It makes multiple contacts with different domains of the 23S rRNA in the assembled 50S subunit and ribosome. Its function is as follows. Forms part of the polypeptide exit tunnel. The polypeptide is Large ribosomal subunit protein uL4 (Synechocystis sp. (strain ATCC 27184 / PCC 6803 / Kazusa)).